Here is a 207-residue protein sequence, read N- to C-terminus: MIQKYPSRLLEKAIDQFATLPGVGRKTALRLALYLLRQPVENTRQFAAALVDLREHISYCRRCHNISDSGVCTICADPTRDQSTLCVVENIRDVMAIENTSQYRGLYHVLGGVISPMDGIGPGDLQIDSLVHRVASEQIHEVILALSTTMEGDTTNFFLFRKLESTGVRVSVIARGIAIGDEIEYADEITLGRSILNRTDFSDSVKF.

The C4-type zinc-finger motif lies at 60–75 (CRRCHNISDSGVCTIC). Residues 83–178 (STLCVVENIR…RVSVIARGIA (96 aa)) form the Toprim domain.

This sequence belongs to the RecR family.

May play a role in DNA repair. It seems to be involved in an RecBC-independent recombinational process of DNA repair. It may act with RecF and RecO. The protein is Recombination protein RecR of Porphyromonas gingivalis (strain ATCC 33277 / DSM 20709 / CIP 103683 / JCM 12257 / NCTC 11834 / 2561).